The following is a 123-amino-acid chain: Steroid Delta-isomerase (123 aa).

The Proton donor role is filled by Y12. D36 acts as the Proton acceptor in catalysis. D96 serves as a coordination point for substrate.

As to quaternary structure, homodimer.

The enzyme catalyses a 3-oxo-Delta(5)-steroid = a 3-oxo-Delta(4)-steroid. The polypeptide is Steroid Delta-isomerase (ksdI) (Nocardioides simplex (Arthrobacter simplex)).